The following is a 379-amino-acid chain: Retron Se72 reverse transcriptase (379 aa).

The region spanning 1–245 is the Reverse transcriptase domain; sequence MNKPRFNGTP…SKLSVTGLWV (245 aa). Mg(2+)-binding residues include aspartate 109, aspartate 188, and aspartate 189.

It belongs to the bacterial reverse transcriptase family.

It catalyses the reaction DNA(n) + a 2'-deoxyribonucleoside 5'-triphosphate = DNA(n+1) + diphosphate. Functionally, reverse transcriptase (RT) component of antiviral defense system retron Se72, composed of a non-coding RNA (ncRNA), this reverse transcriptase (RT) and the following cold shock-like protein. Expression of retron Se72 confers protection against bacteriophage lambda. At multiplicity of infection (MOI) of 0.02 cultures slow growth when infected with lambda but do not collapse, at MOI 2 cultures enter growth stasis. Responsible for synthesis of msDNA (a branched molecule with RNA linked by a 2',5'-phosphodiester bond to ssDNA). The retron transcript serves as primer (from a conserved internal G residue) and template for the reaction, and codes for the RT. The DNA segment is predicted to be 72 bases long. This Salmonella heidelberg (strain 579083-10) protein is Retron Se72 reverse transcriptase.